The sequence spans 205 residues: Adenylyl-sulfate kinase (205 aa).

Position 31 to 38 (31 to 38 (GLSGAGKS)) interacts with ATP. Residue serine 105 is the Phosphoserine intermediate of the active site.

The protein belongs to the APS kinase family.

It carries out the reaction adenosine 5'-phosphosulfate + ATP = 3'-phosphoadenylyl sulfate + ADP + H(+). It participates in sulfur metabolism; hydrogen sulfide biosynthesis; sulfite from sulfate: step 2/3. Its function is as follows. Catalyzes the synthesis of activated sulfate. This chain is Adenylyl-sulfate kinase, found in Shewanella oneidensis (strain ATCC 700550 / JCM 31522 / CIP 106686 / LMG 19005 / NCIMB 14063 / MR-1).